The chain runs to 801 residues: Zinc finger Y-chromosomal protein (801 aa).

Serine 270 is modified (phosphoserine). The C2H2-type 1 zinc finger occupies 421–443; that stretch reads YPCMICGKKFKSRGFLKRHMKNH. The segment at 452–474 adopts a C2H2-type 2; atypical zinc-finger fold; sequence YHCTDCDYTTNKKISLHNHLESH. 11 consecutive C2H2-type zinc fingers follow at residues 484–506, 515–538, 544–566, 572–595, 601–623, 629–652, 658–680, 686–709, 715–737, 743–766, and 772–795; these read IECD…KMVH, HKCK…LAVH, HICV…MRIH, YQCQ…KTKH, FKCD…TLVH, HQCL…ISVH, HKCE…VAVH, HQCR…LSVH, FRCK…MKTH, YQCE…ISIH, and HRCE…MRHH.

The protein belongs to the krueppel C2H2-type zinc-finger protein family. ZFX/ZFY subfamily.

The protein resides in the nucleus. Probable transcriptional activator. Binds to the consensus sequence 5'-AGGCCY-3'. This chain is Zinc finger Y-chromosomal protein (ZFY), found in Homo sapiens (Human).